Consider the following 264-residue polypeptide: MKIEAVIFDWAGTTVDYGCFAPLEVFMEIFHKRGVGITAEEARKPMGLLKIDHVRALTEMPRIANEWNRIFGQLPTETDIQEMYEEFEEILFAILPRYASPIHGVKEVIASLRERGIKIGSTTGYTREMMDIVAKEAALQGYKPDFLVTPDDVPAGRPYPWMCYKNAMELGVYPMNHMIKIGDTVSDMKEGRNAGMWTVGVILGSSELGLSEEEVENMDSAELREKIEVVRNRFVENGAHFTIETMQELESVMERIEKQELIIS.

The active-site Nucleophile is Asp9. Asp9 and Ala11 together coordinate Mg(2+). Lys50 (schiff-base intermediate with substrate) is an active-site residue. Asp183 contacts Mg(2+).

The protein belongs to the HAD-like hydrolase superfamily. PhnX family. Homodimer. It depends on Mg(2+) as a cofactor.

The catalysed reaction is phosphonoacetaldehyde + H2O = acetaldehyde + phosphate + H(+). Its function is as follows. Involved in phosphonate degradation. The protein is Phosphonoacetaldehyde hydrolase of Bacillus cereus (strain AH820).